A 486-amino-acid polypeptide reads, in one-letter code: Probable FAD-binding monooxygenase ltbD (486 aa).

Residues 186 to 243 (PAGDGGTNDQGPSRAQSTASSGGSGRPRSTESPQSGAQASTTPTSPPTTQSTGDDPAA) are disordered. The span at 194 to 206 (DQGPSRAQSTASS) shows a compositional bias: polar residues. Residues 220–241 (SGAQASTTPTSPPTTQSTGDDP) show a composition bias toward low complexity.

Belongs to the FAD-binding monooxygenase family. Homodimer. FAD serves as cofactor.

Probable FAD-binding monooxygenase; part of the gene cluster that mediates the biosynthesis of luteodienoside A, a glycosylated polyketide consisting of an unusual 1-O-beta-D-glucopyranosyl-myo-inositol (glucinol) ester of 3-hydroxy-2,2,4-trimethylocta-4,6-dienoic acid. The HR-PKS ltbA produces the trimethylated polyketide chain from acetyl-CoA, malonyl-CoA and S-adenosylmethionine (SAM), and the ltbA cAT domain then uses glucinol produced by the glycosyltransferase ltbB as an offloading substrate to release luteodienoside A. Since ltbA and ltbB are sufficient for the biosynthesis of luteodienoside A, the functions of the methyltransferase ltbC and the FAD-binding monooxygenase ltbD within the pathway remain obscur. The polypeptide is Probable FAD-binding monooxygenase ltbD (Aspergillus luteorubrus).